A 258-amino-acid chain; its full sequence is Pyridoxine 5'-phosphate synthase (258 aa).

N16 contacts 3-amino-2-oxopropyl phosphate. D18 to H19 is a binding site for 1-deoxy-D-xylulose 5-phosphate. Position 27 (R27) interacts with 3-amino-2-oxopropyl phosphate. The Proton acceptor role is filled by H52. 2 residues coordinate 1-deoxy-D-xylulose 5-phosphate: R54 and H59. E79 serves as the catalytic Proton acceptor. Residue T109 participates in 1-deoxy-D-xylulose 5-phosphate binding. H200 functions as the Proton donor in the catalytic mechanism. Residues G201 and G222 to H223 each bind 3-amino-2-oxopropyl phosphate.

It belongs to the PNP synthase family. In terms of assembly, homooctamer; tetramer of dimers.

The protein resides in the cytoplasm. It carries out the reaction 3-amino-2-oxopropyl phosphate + 1-deoxy-D-xylulose 5-phosphate = pyridoxine 5'-phosphate + phosphate + 2 H2O + H(+). Its pathway is cofactor biosynthesis; pyridoxine 5'-phosphate biosynthesis; pyridoxine 5'-phosphate from D-erythrose 4-phosphate: step 5/5. Functionally, catalyzes the complicated ring closure reaction between the two acyclic compounds 1-deoxy-D-xylulose-5-phosphate (DXP) and 3-amino-2-oxopropyl phosphate (1-amino-acetone-3-phosphate or AAP) to form pyridoxine 5'-phosphate (PNP) and inorganic phosphate. The polypeptide is Pyridoxine 5'-phosphate synthase (Burkholderia lata (strain ATCC 17760 / DSM 23089 / LMG 22485 / NCIMB 9086 / R18194 / 383)).